A 117-amino-acid polypeptide reads, in one-letter code: MRHKVSGRRFDRPTGQRMSLYRNLVTDLLNYEEITISEPRAKEIRSMAEKMITLGKKGTLASRRRALAFVYMPGIVEKVFEDLSKRYAERPGGYTRMTKLGPRQGDGAEMVKLELIK.

This sequence belongs to the bacterial ribosomal protein bL17 family. In terms of assembly, part of the 50S ribosomal subunit. Contacts protein L32.

This Dehalococcoides mccartyi (strain ATCC BAA-2100 / JCM 16839 / KCTC 5957 / BAV1) protein is Large ribosomal subunit protein bL17.